The chain runs to 402 residues: Methylthioribose-1-phosphate isomerase (402 aa).

The Proton donor role is filled by D275.

It belongs to the eIF-2B alpha/beta/delta subunits family. MtnA subfamily.

The protein localises to the cytoplasm. The protein resides in the nucleus. It carries out the reaction 5-(methylsulfanyl)-alpha-D-ribose 1-phosphate = 5-(methylsulfanyl)-D-ribulose 1-phosphate. Its pathway is amino-acid biosynthesis; L-methionine biosynthesis via salvage pathway; L-methionine from S-methyl-5-thio-alpha-D-ribose 1-phosphate: step 1/6. Catalyzes the interconversion of methylthioribose-1-phosphate (MTR-1-P) into methylthioribulose-1-phosphate (MTRu-1-P). The protein is Methylthioribose-1-phosphate isomerase of Clavispora lusitaniae (strain ATCC 42720) (Yeast).